Reading from the N-terminus, the 338-residue chain is LIX1-like protein (338 aa).

Positions 1–65 are disordered; sequence METMRAQRLQ…LLLAGAPGLP (65 aa). A compositionally biased stretch (low complexity) spans 29 to 38; the sequence is TGAPTSAATP. Pro residues predominate over residues 39 to 56; that stretch reads PAGPPPAPPPPAPPPPPL.

Belongs to the LIX1 family.

The chain is LIX1-like protein (Lix1l) from Rattus norvegicus (Rat).